Consider the following 609-residue polypeptide: Oxidoreductase tpcJ (609 aa).

Residues 1 to 16 (MITVIKWLVSGCCALA) form the signal peptide. N-linked (GlcNAc...) asparagine glycans are attached at residues asparagine 63, asparagine 107, asparagine 113, asparagine 240, asparagine 283, asparagine 471, and asparagine 601. Plastocyanin-like domains lie at 66-186 (VSQQ…HGPS), 196-351 (PWLL…RYDE), and 429-567 (VDWK…EQPK).

The protein belongs to the multicopper oxidase family. In terms of tissue distribution, specifically expressed in conidia.

The protein operates within secondary metabolite biosynthesis. In terms of biological role, oxidoreductase; part of the gene cluster that mediates the biosynthesis of trypacidin, a mycotoxin with antiprotozoal activity and that plays a role in the infection process. The pathway begins with the synthesis of atrochrysone thioester by the polyketide synthase (PKS) tpcC. The atrochrysone carboxyl ACP thioesterase tpcB then breaks the thioester bond and releases the atrochrysone carboxylic acid from tpcC. The decarboxylase tpcK converts atrochrysone carboxylic acid to atrochrysone which is further reduced into emodin anthrone. The next step is performed by the emodin anthrone oxygenase tpcL that catalyzes the oxidation of emodinanthrone to emodin. Emodin O-methyltransferase encoded by tpcA catalyzes methylation of the 8-hydroxy group of emodin to form questin. Ring cleavage of questin by questin oxidase tpcI leads to desmethylsulochrin via several intermediates including questin epoxide. Another methylation step catalyzed by tpcM leads to the formation of sulochrin which is further converted to monomethylsulfochrin by tpcH. Finally, the tpcJ catalyzes the conversion of monomethylsulfochrin to trypacidin. Trypacidin is toxic for human pulmonary and bronchial epithelial cells by initiating the intracellular formation of nitric oxide (NO) and hydrogen peroxide (H(2)O(2)), thus triggering host necrotic cell death. The trypacidin pathway is also able to produce endocrocin via a distinct route from the endocrocin Enc pathway. The protein is Oxidoreductase tpcJ of Aspergillus fumigatus (strain ATCC MYA-4609 / CBS 101355 / FGSC A1100 / Af293) (Neosartorya fumigata).